A 280-amino-acid chain; its full sequence is Homeobox protein SMOX-1 (280 aa).

The segment at Pro61 to Ser88 is disordered. A compositionally biased stretch (low complexity) spans Asn69–Asp85. The Antp-type hexapeptide motif lies at Val214–Asn219. The segment at residues Gln229–Arg280 is a DNA-binding region (homeobox).

It belongs to the Antp homeobox family.

It is found in the nucleus. The protein is Homeobox protein SMOX-1 (SMOX-1) of Schistosoma mansoni (Blood fluke).